A 301-amino-acid polypeptide reads, in one-letter code: Acetylglutamate kinase (301 aa).

Substrate contacts are provided by residues 68-69, Arg-90, and Asn-195; that span reads GG.

It belongs to the acetylglutamate kinase family. ArgB subfamily.

Its subcellular location is the cytoplasm. The enzyme catalyses N-acetyl-L-glutamate + ATP = N-acetyl-L-glutamyl 5-phosphate + ADP. Its pathway is amino-acid biosynthesis; L-arginine biosynthesis; N(2)-acetyl-L-ornithine from L-glutamate: step 2/4. Catalyzes the ATP-dependent phosphorylation of N-acetyl-L-glutamate. The sequence is that of Acetylglutamate kinase from Pseudomonas entomophila (strain L48).